The primary structure comprises 742 residues: G2/M phase-specific E3 ubiquitin-protein ligase (742 aa).

Residues 10-50 form a C2HC pre-PHD-type zinc finger; the sequence is SPPCVLCGWTDNCPEKYGEKRTYVEYNLTLHNYCLLMSSGI. The PHD-type 1 zinc-finger motif lies at 78-127; that stretch reads LMCNICRKKGASIGCVAPKCKRSYHFPCGLQKECVFQFMEDFRSYCWEHK. Residues 142–192 form a PHD-type 2; degenerate zinc finger; sequence QCTICLDLVEHLPLYSVLRSPCCKNTWFHRECLQYQALSAGIFFFRCAVCN. The PHD-type 3 zinc finger occupies 236-285; it reads RCLCKNGRDYNKPDSKWEIKRCQSCGSRGTHLACSSIKSWEQNWECVECR. The HECT domain occupies 417-742; that stretch reads KGFRQRNFRP…IRSTLRGERE (326 aa).

It localises to the nucleus. Its subcellular location is the nucleolus. The protein localises to the cytoplasm. It catalyses the reaction S-ubiquitinyl-[E2 ubiquitin-conjugating enzyme]-L-cysteine + [acceptor protein]-L-lysine = [E2 ubiquitin-conjugating enzyme]-L-cysteine + N(6)-ubiquitinyl-[acceptor protein]-L-lysine.. It participates in protein modification; protein ubiquitination. In terms of biological role, E3 ubiquitin-protein ligase which accepts ubiquitin from an E2 ubiquitin-conjugating enzyme in the form of a thioester and then directly transfers the ubiquitin to targeted substrates. Essential in early embryonic development to prevent apoptotic death. The chain is G2/M phase-specific E3 ubiquitin-protein ligase (G2E3) from Gallus gallus (Chicken).